Here is a 276-residue protein sequence, read N- to C-terminus: Diaminopimelate epimerase (276 aa).

The substrate site is built by Asn-13, Gln-46, and Asn-66. Cys-75 functions as the Proton donor in the catalytic mechanism. Substrate is bound by residues Gly-76 to Asn-77, Asn-159, Asn-192, and Glu-210 to Arg-211. The active-site Proton acceptor is Cys-219. Position 220–221 (Gly-220–Thr-221) interacts with substrate.

This sequence belongs to the diaminopimelate epimerase family. As to quaternary structure, homodimer.

The protein resides in the cytoplasm. The enzyme catalyses (2S,6S)-2,6-diaminopimelate = meso-2,6-diaminopimelate. It participates in amino-acid biosynthesis; L-lysine biosynthesis via DAP pathway; DL-2,6-diaminopimelate from LL-2,6-diaminopimelate: step 1/1. In terms of biological role, catalyzes the stereoinversion of LL-2,6-diaminopimelate (L,L-DAP) to meso-diaminopimelate (meso-DAP), a precursor of L-lysine and an essential component of the bacterial peptidoglycan. This Chromobacterium violaceum (strain ATCC 12472 / DSM 30191 / JCM 1249 / CCUG 213 / NBRC 12614 / NCIMB 9131 / NCTC 9757 / MK) protein is Diaminopimelate epimerase.